A 197-amino-acid polypeptide reads, in one-letter code: Small ribosomal subunit protein uS2 (197 aa).

This sequence belongs to the universal ribosomal protein uS2 family.

The chain is Small ribosomal subunit protein uS2 (rps2) from Archaeoglobus fulgidus (strain ATCC 49558 / DSM 4304 / JCM 9628 / NBRC 100126 / VC-16).